Here is a 774-residue protein sequence, read N- to C-terminus: Penicillin acylase 2 proenzyme (774 aa).

The Nucleophile role is filled by S240.

Belongs to the peptidase S45 family. In terms of assembly, heterodimer of a small subunit and a large subunit processed from the same precursor.

The enzyme catalyses a penicillin + H2O = 6-aminopenicillanate + a carboxylate. The protein is Penicillin acylase 2 proenzyme (acyII) of Pseudomonas sp. (strain SE83).